The sequence spans 386 residues: Myosin light chain kinase family member 4 (386 aa).

Ser-100 is modified (phosphoserine). One can recognise a Protein kinase domain in the interval 107–361 (VSKSEILGGG…ASEALKHPWL (255 aa)). Residues 113–121 (LGGGRFGQV) and Lys-136 contribute to the ATP site. Asp-227 functions as the Proton acceptor in the catalytic mechanism.

This sequence belongs to the protein kinase superfamily. CAMK Ser/Thr protein kinase family.

It catalyses the reaction L-seryl-[protein] + ATP = O-phospho-L-seryl-[protein] + ADP + H(+). The enzyme catalyses L-threonyl-[protein] + ATP = O-phospho-L-threonyl-[protein] + ADP + H(+). In Mus musculus (Mouse), this protein is Myosin light chain kinase family member 4 (Mylk4).